The primary structure comprises 316 residues: Spermidine synthase (316 aa).

Positions 25–262 constitute a PABS domain; it reads PGWFSEISPM…GVIGFMLCST (238 aa). Residue Q56 coordinates S-adenosyl 3-(methylsulfanyl)propylamine. Y86 provides a ligand contact to putrescine. Residues Q87, D111, E131, 162 to 163, and D181 each bind S-adenosyl 3-(methylsulfanyl)propylamine; that span reads DG. D181 functions as the Proton acceptor in the catalytic mechanism. Putrescine contacts are provided by residues 181–184 and Y250; that span reads DSSD.

This sequence belongs to the spermidine/spermine synthase family.

The catalysed reaction is S-adenosyl 3-(methylsulfanyl)propylamine + putrescine = S-methyl-5'-thioadenosine + spermidine + H(+). It participates in amine and polyamine biosynthesis; spermidine biosynthesis; spermidine from putrescine: step 1/1. This is Spermidine synthase from Coffea arabica (Arabian coffee).